The following is a 114-amino-acid chain: Type 4 adapter protein IcmS (114 aa).

The T4BSS is a complex nanomachine composed of several subcomplexes. This subunit is part of the Type IV Coupling Complex (T4CC), a subcomplex composed of the DotLMNYZ core and the IcmSW-LvgA adapter subunits, linked by the C-terminal tail of DotL. Interacts with IcmW. IcmS and IcmW form a stable complex. Interacts directly with the type 4 coupling protein DotL. Interacts with LvgA. Interacts with effector proteins.

The protein resides in the cytoplasm. With respect to regulation, interaction with DotL is critical for the export of IcmSW-dependent substrates. In terms of biological role, component of the Dot/Icm type IVB secretion system (T4BSS), which is used to inject bacterial effector proteins into eukaryotic host cells. Part of a subcomplex which recruits effector proteins and delivers them to the core transmembrane subcomplex. The IcmS/IcmW protein complex plays an important role in protein translocation by interacting with multiple Dot/Icm effector proteins to facilitate their translocation into host cells. Interaction promotes conformational changes in the effector protein, which may facilitate display of a C-terminal translocation signal. May maintain the substrates in a translocation competent form. Required for intracellular growth in host cells, replicative phagosome formation and phagosome trafficking. IcmS is required for IcmW stability. This Legionella pneumophila subsp. pneumophila (strain Philadelphia 1 / ATCC 33152 / DSM 7513) protein is Type 4 adapter protein IcmS.